A 147-amino-acid polypeptide reads, in one-letter code: MSEELQPVFSIERLYVKDLSLEVPHAPQIFLEQGEPEVDMRVSTGSQKLEDGYYNVDVTVTVTAKLDNERTMFLNEVTQSGIFRLENIPEEDVQLLLGVACPNILFPYAREAVSGTVTRAGFPPVLLAPINFEAIYQQQQEAEAAGA.

The protein belongs to the SecB family. As to quaternary structure, homotetramer, a dimer of dimers. One homotetramer interacts with 1 SecA dimer.

Its subcellular location is the cytoplasm. Its function is as follows. One of the proteins required for the normal export of preproteins out of the cell cytoplasm. It is a molecular chaperone that binds to a subset of precursor proteins, maintaining them in a translocation-competent state. It also specifically binds to its receptor SecA. This chain is Protein-export protein SecB, found in Neisseria meningitidis serogroup C (strain 053442).